The chain runs to 271 residues: Protein FAM110D (271 aa).

Disordered stretches follow at residues 1–83, 116–145, and 186–245; these read MLLA…RPDS, PRDAAPSSPASTERPAASGGWAAPQDAPEA, and PQSW…PVSV. Over residues 68–78 the composition is skewed to basic residues; that stretch reads RPVRRGSGRRL. Low complexity predominate over residues 116–126; the sequence is PRDAAPSSPAS. Over residues 220–231 the composition is skewed to gly residues; that stretch reads SPGGAGGGGGSE.

This sequence belongs to the FAM110 family.

The protein is Protein FAM110D (FAM110D) of Homo sapiens (Human).